Reading from the N-terminus, the 155-residue chain is Transcription antitermination protein NusB (155 aa).

It belongs to the NusB family.

Involved in transcription antitermination. Required for transcription of ribosomal RNA (rRNA) genes. Binds specifically to the boxA antiterminator sequence of the ribosomal RNA (rrn) operons. The chain is Transcription antitermination protein NusB from Ralstonia pickettii (strain 12J).